Here is a 226-residue protein sequence, read N- to C-terminus: Ribonuclease T (226 aa).

The Exonuclease domain occupies 20-194; the sequence is VVIDVETAGF…YDTERTAELF (175 aa). Positions 23, 25, 181, and 186 each coordinate Mg(2+). Catalysis depends on histidine 181, which acts as the Proton donor/acceptor.

This sequence belongs to the RNase T family. In terms of assembly, homodimer. Mg(2+) serves as cofactor.

Its function is as follows. Trims short 3' overhangs of a variety of RNA species, leaving a one or two nucleotide 3' overhang. Responsible for the end-turnover of tRNA: specifically removes the terminal AMP residue from uncharged tRNA (tRNA-C-C-A). Also appears to be involved in tRNA biosynthesis. This Shewanella denitrificans (strain OS217 / ATCC BAA-1090 / DSM 15013) protein is Ribonuclease T.